The following is a 705-amino-acid chain: Kinesin-like protein KIF2A (705 aa).

Positions 65 to 185 are disordered; that stretch reads DLVPDEDIEP…QQELREKRAQ (121 aa). Residue serine 75 is modified to Phosphoserine. Threonine 96 is modified (phosphothreonine). Serine 99 carries the phosphoserine modification. Lysine 101 carries the N6-acetyllysine modification. Residues 122–139 show a composition bias toward polar residues; that stretch reads LPEQSSSAQQNGSVSDIS. A phosphoserine mark is found at serine 134 and serine 139. Residues 153–186 are a coiled coil; that stretch reads RRKSNCVKEVEKLQEKREKRRLQQQELREKRAQD. Basic and acidic residues predominate over residues 158 to 185; it reads CVKEVEKLQEKREKRRLQQQELREKRAQ. One can recognise a Kinesin motor domain in the interval 222–552; sequence RICVCVRKRP…LRYANRVKEL (331 aa). 312–319 provides a ligand contact to ATP; the sequence is GQTGSGKT. Glutamine 572 is modified (phosphoserine). Residues 659–698 are a coiled coil; the sequence is ATQLEAILEQKIDILTELRDKVKSFRAALQEEEQASKQIN.

The protein belongs to the TRAFAC class myosin-kinesin ATPase superfamily. Kinesin family. MCAK/KIF2 subfamily. As to quaternary structure, interacts with AURKA and PLK1. Interacts with PSRC1. Interacts with MCRS1; the interaction enhances recruitment of KIF2A to the minus ends of spindle microtubules which promotes chromosome alignment.

Its subcellular location is the cytoplasm. The protein localises to the cytoskeleton. It is found in the microtubule organizing center. It localises to the centrosome. The protein resides in the spindle pole. Its subcellular location is the spindle. Functionally, plus end-directed microtubule-dependent motor required for normal brain development. May regulate microtubule dynamics during axonal growth. Required for normal progression through mitosis. Required for normal congress of chromosomes at the metaphase plate. Required for normal spindle dynamics during mitosis. Promotes spindle turnover. Implicated in formation of bipolar mitotic spindles. Has microtubule depolymerization activity. In Rattus norvegicus (Rat), this protein is Kinesin-like protein KIF2A.